A 414-amino-acid chain; its full sequence is MGVSKLDILYRRLLLTKLFIRGWGRPEDLKRLFEFRKMIGNRERCQNLVSSDYPVHIDKIEEQSDCKILDGHFVSPMAHYVPDIMPIESVIARFQFIVPKEWNSKYRPVCIHLAGTGDHHYWRRRTLMARPMIKEARMASLLLENPYYGCRKPKDQVRSSLKNVSDLFVMGGALVLESAALLHWLEREGYGPLGMTGISMGGHMASLAVSNWPKPMPLIPCLSWSTASGVFTTTDSFKMGQEFVKHFTSSADKLTNLNLVSRTLNLDISNQVVSQKPADCHNSSKTSVSATSEGLLLQDTSKMKRFNQTLSTNKSGYTSRNPQSYHLLSKEQSRNSLRKESLIFMKGVMDECTHVANFSVPVDPSLIIVVQAKEDAYIPRTGVRSLQEIWPGCEIRYLEGGHISAYLFKQGLFR.

The N-terminal stretch at 1 to 24 (MGVSKLDILYRRLLLTKLFIRGWG) is a signal peptide. N-linked (GlcNAc...) asparagine glycosylation is found at N282 and N307.

It belongs to the AB hydrolase superfamily.

It localises to the secreted. This chain is Protein ABHD18, found in Homo sapiens (Human).